The sequence spans 394 residues: Chaperone protein DnaJ (394 aa).

The region spanning 5–75 (DYYEVLGVDK…EKKQQYDQFG (71 aa)) is the J domain. A CR-type zinc finger spans residues 150–231 (GVEKTIKYKR…CRGTGTAKET (82 aa)). The Zn(2+) site is built by cysteine 163, cysteine 166, cysteine 179, cysteine 182, cysteine 205, cysteine 208, cysteine 219, and cysteine 222. 4 CXXCXGXG motif repeats span residues 163–170 (CEHCHGTG), 179–186 (CPTCNGQG), 205–212 (CPDCHGTG), and 219–226 (CKHCRGTG).

The protein belongs to the DnaJ family. In terms of assembly, homodimer. Zn(2+) serves as cofactor.

The protein localises to the cytoplasm. Functionally, participates actively in the response to hyperosmotic and heat shock by preventing the aggregation of stress-denatured proteins and by disaggregating proteins, also in an autonomous, DnaK-independent fashion. Unfolded proteins bind initially to DnaJ; upon interaction with the DnaJ-bound protein, DnaK hydrolyzes its bound ATP, resulting in the formation of a stable complex. GrpE releases ADP from DnaK; ATP binding to DnaK triggers the release of the substrate protein, thus completing the reaction cycle. Several rounds of ATP-dependent interactions between DnaJ, DnaK and GrpE are required for fully efficient folding. Also involved, together with DnaK and GrpE, in the DNA replication of plasmids through activation of initiation proteins. This Fusobacterium nucleatum subsp. polymorphum (Fusobacterium polymorphum) protein is Chaperone protein DnaJ.